The sequence spans 942 residues: Exopolysaccharide phosphotransferase SCO2592 (942 aa).

The protein belongs to the stealth family.

This is Exopolysaccharide phosphotransferase SCO2592 from Streptomyces coelicolor (strain ATCC BAA-471 / A3(2) / M145).